Reading from the N-terminus, the 467-residue chain is Xanthan biosynthesis protein XanB (467 aa).

It belongs to the mannose-6-phosphate isomerase type 2 family.

It carries out the reaction D-mannose 6-phosphate = D-fructose 6-phosphate. The catalysed reaction is alpha-D-mannose 1-phosphate + GTP + H(+) = GDP-alpha-D-mannose + diphosphate. The protein operates within nucleotide-sugar biosynthesis; GDP-alpha-D-mannose biosynthesis; GDP-alpha-D-mannose from alpha-D-mannose 1-phosphate (GTP route): step 1/1. It participates in nucleotide-sugar biosynthesis; GDP-alpha-D-mannose biosynthesis; alpha-D-mannose 1-phosphate from D-fructose 6-phosphate: step 1/2. Involved in xanthan production. This chain is Xanthan biosynthesis protein XanB (xanB), found in Xanthomonas campestris pv. campestris (strain B100).